The primary structure comprises 514 residues: Na(+)/H(+) antiporter NhaB (514 aa).

A run of 11 helical transmembrane segments spans residues 21-41 (LAIV…SPFI), 43-63 (GWLL…CYPL), 88-108 (IMAN…IFFM), 143-163 (FLDA…FYGV), 203-223 (LMMH…VGEP), 239-259 (FFLR…LTCF), 304-324 (ALIA…VGLI), 349-369 (QESL…AVII), 390-410 (LALF…VFVA), 448-468 (ATPN…SPLI), and 484-504 (IVLS…ATIW).

Belongs to the NhaB Na(+)/H(+) (TC 2.A.34) antiporter family.

Its subcellular location is the cell inner membrane. It catalyses the reaction 2 Na(+)(in) + 3 H(+)(out) = 2 Na(+)(out) + 3 H(+)(in). In terms of biological role, na(+)/H(+) antiporter that extrudes sodium in exchange for external protons. This chain is Na(+)/H(+) antiporter NhaB, found in Haemophilus influenzae (strain ATCC 51907 / DSM 11121 / KW20 / Rd).